The chain runs to 167 residues: Insertion element IS1 4 protein InsB (167 aa).

It belongs to the transposase 27 family.

Absolutely required for transposition of IS1. In Escherichia coli (strain K12), this protein is Insertion element IS1 4 protein InsB (insB4).